A 95-amino-acid polypeptide reads, in one-letter code: Small ribosomal subunit protein bS6 (95 aa).

Belongs to the bacterial ribosomal protein bS6 family.

Its function is as follows. Binds together with bS18 to 16S ribosomal RNA. This Aster yellows witches'-broom phytoplasma (strain AYWB) protein is Small ribosomal subunit protein bS6.